We begin with the raw amino-acid sequence, 206 residues long: Flavin reductase (NADPH) (206 aa).

Positions 10, 12, 13, 14, 15, 35, 38, and 39 each coordinate NADP(+). At Ser-42 the chain carries Phosphoserine. NADP(+) is bound by residues Asp-54, Val-55, Leu-75, Gly-76, and Arg-78. Phosphoserine is present on Ser-82. Met-87, Cys-109, His-132, His-153, and Ile-154 together coordinate NADP(+). Catalysis depends on Cys-109, which acts as the S-nitroso-cysteine intermediate; for S-nitroso-CoA-dependent nitrosyltransferase activity. The active-site S-nitroso-cysteine intermediate; for S-nitroso-CoA-dependent nitrosyltransferase activity is the Cys-188.

Monomer. As to expression, at least expressed in the liver and erythrocyte.

The protein resides in the cytoplasm. It carries out the reaction reduced riboflavin + NADP(+) = riboflavin + NADPH + 2 H(+). It catalyses the reaction bilirubin IXbeta + NADP(+) = biliverdin IXbeta + NADPH + H(+). The enzyme catalyses FMNH2 + NAD(+) = FMN + NADH + 2 H(+). The catalysed reaction is FMNH2 + NADP(+) = FMN + NADPH + 2 H(+). It carries out the reaction S-nitroso-CoA + L-cysteinyl-[protein] = S-nitroso-L-cysteinyl-[protein] + CoA. It catalyses the reaction L-cysteinyl-[SCAN] + S-nitroso-CoA = S-nitroso-L-cysteinyl-[SCAN] + CoA. The enzyme catalyses S-nitroso-L-cysteinyl-[SCAN] + L-cysteinyl-[protein] = L-cysteinyl-[SCAN] + S-nitroso-L-cysteinyl-[protein]. Functionally, enzyme that can both act as a NAD(P)H-dependent reductase and a S-nitroso-CoA-dependent nitrosyltransferase. Promotes fetal heme degradation during development. Also expressed in adult tissues, where it acts as a regulator of hematopoiesis, intermediary metabolism (glutaminolysis, glycolysis, TCA cycle and pentose phosphate pathway) and insulin signaling. Has a broad specificity oxidoreductase activity by catalyzing the NAD(P)H-dependent reduction of a variety of flavins, such as riboflavin, FAD or FMN, biliverdins, methemoglobin and PQQ (pyrroloquinoline quinone). Contributes to fetal heme catabolism by catalyzing reduction of biliverdin IXbeta into bilirubin IXbeta in the liver. Biliverdin IXbeta, which constitutes the major heme catabolite in the fetus is not present in adult. Does not reduce bilirubin IXalpha. Can also reduce the complexed Fe(3+) iron to Fe(2+) in the presence of FMN and NADPH. Acts as a protein nitrosyltransferase by catalyzing nitrosylation of cysteine residues of target proteins, such as HMOX2, INSR and IRS1. S-nitroso-CoA-dependent nitrosyltransferase activity is mediated via a 'ping-pong' mechanism: BLVRB first associates with both S-nitroso-CoA and protein substrate, nitric oxide group is then transferred from S-nitroso-CoA to Cys-109 and Cys-188 residues of BLVRB and from S-nitroso-BLVRB to the protein substrate. Inhibits insulin signaling by mediating nitrosylation of INSR and IRS1, leading to their inhibition. The polypeptide is Flavin reductase (NADPH) (BLVRB) (Bos taurus (Bovine)).